The sequence spans 938 residues: LPS-assembly protein LptD (938 aa).

An N-terminal signal peptide occupies residues Met-1 to Ala-33. Positions Lys-52 to Arg-96 are disordered. The span at Ser-65 to Thr-81 shows a compositional bias: low complexity.

It belongs to the LptD family. Component of the lipopolysaccharide transport and assembly complex. Interacts with LptE and LptA.

The protein resides in the cell outer membrane. Its function is as follows. Together with LptE, is involved in the assembly of lipopolysaccharide (LPS) at the surface of the outer membrane. The chain is LPS-assembly protein LptD from Ectopseudomonas mendocina (strain ymp) (Pseudomonas mendocina).